The following is a 95-amino-acid chain: Small ribosomal subunit protein bS6 (95 aa).

It belongs to the bacterial ribosomal protein bS6 family.

Its function is as follows. Binds together with bS18 to 16S ribosomal RNA. This Geobacillus kaustophilus (strain HTA426) protein is Small ribosomal subunit protein bS6.